Here is a 279-residue protein sequence, read N- to C-terminus: Thymidylate synthase (279 aa).

133 to 134 serves as a coordination point for dUMP; sequence RR. Cys-154 (nucleophile) is an active-site residue. DUMP is bound by residues 178 to 181, Asn-189, and 219 to 221; these read RSND and HIY. Asp-181 is a (6R)-5,10-methylene-5,6,7,8-tetrahydrofolate binding site. Ala-278 contacts (6R)-5,10-methylene-5,6,7,8-tetrahydrofolate.

It belongs to the thymidylate synthase family. Bacterial-type ThyA subfamily. Homodimer.

It localises to the cytoplasm. It carries out the reaction dUMP + (6R)-5,10-methylene-5,6,7,8-tetrahydrofolate = 7,8-dihydrofolate + dTMP. It functions in the pathway pyrimidine metabolism; dTTP biosynthesis. Functionally, catalyzes the reductive methylation of 2'-deoxyuridine-5'-monophosphate (dUMP) to 2'-deoxythymidine-5'-monophosphate (dTMP) while utilizing 5,10-methylenetetrahydrofolate (mTHF) as the methyl donor and reductant in the reaction, yielding dihydrofolate (DHF) as a by-product. This enzymatic reaction provides an intracellular de novo source of dTMP, an essential precursor for DNA biosynthesis. This chain is Thymidylate synthase, found in Streptococcus sanguinis (strain SK36).